The chain runs to 87 residues: Small ribosomal subunit protein bS20 (87 aa).

Over residues methionine 1–arginine 12 the composition is skewed to basic residues. The segment at methionine 1–asparagine 21 is disordered.

It belongs to the bacterial ribosomal protein bS20 family.

Its function is as follows. Binds directly to 16S ribosomal RNA. This chain is Small ribosomal subunit protein bS20, found in Syntrophotalea carbinolica (strain DSM 2380 / NBRC 103641 / GraBd1) (Pelobacter carbinolicus).